Consider the following 480-residue polypeptide: Aspartyl/glutamyl-tRNA(Asn/Gln) amidotransferase subunit B (480 aa).

This sequence belongs to the GatB/GatE family. GatB subfamily. Heterotrimer of A, B and C subunits.

It catalyses the reaction L-glutamyl-tRNA(Gln) + L-glutamine + ATP + H2O = L-glutaminyl-tRNA(Gln) + L-glutamate + ADP + phosphate + H(+). It carries out the reaction L-aspartyl-tRNA(Asn) + L-glutamine + ATP + H2O = L-asparaginyl-tRNA(Asn) + L-glutamate + ADP + phosphate + 2 H(+). Allows the formation of correctly charged Asn-tRNA(Asn) or Gln-tRNA(Gln) through the transamidation of misacylated Asp-tRNA(Asn) or Glu-tRNA(Gln) in organisms which lack either or both of asparaginyl-tRNA or glutaminyl-tRNA synthetases. The reaction takes place in the presence of glutamine and ATP through an activated phospho-Asp-tRNA(Asn) or phospho-Glu-tRNA(Gln). The chain is Aspartyl/glutamyl-tRNA(Asn/Gln) amidotransferase subunit B from Streptococcus thermophilus (strain ATCC BAA-491 / LMD-9).